Consider the following 120-residue polypeptide: NADH-quinone oxidoreductase subunit A (120 aa).

3 helical membrane passes run 6–26 (YGII…ALAT), 63–83 (FLYA…YPWA), and 89–109 (LGLF…LGLW).

The protein belongs to the complex I subunit 3 family. NDH-1 is composed of 14 different subunits. Subunits NuoA, H, J, K, L, M, N constitute the membrane sector of the complex.

It localises to the cell membrane. The catalysed reaction is a quinone + NADH + 5 H(+)(in) = a quinol + NAD(+) + 4 H(+)(out). NDH-1 shuttles electrons from NADH, via FMN and iron-sulfur (Fe-S) centers, to quinones in the respiratory chain. The immediate electron acceptor for the enzyme in this species is believed to be a menaquinone. Couples the redox reaction to proton translocation (for every two electrons transferred, four hydrogen ions are translocated across the cytoplasmic membrane), and thus conserves the redox energy in a proton gradient. The protein is NADH-quinone oxidoreductase subunit A of Moorella thermoacetica (strain ATCC 39073 / JCM 9320).